The sequence spans 597 residues: Gamma-terpinene synthase, chloroplastic (597 aa).

Residues 1-47 (MATLSMQVSILSKQVKNLNSFGMRASKLPMVARRVDVSTTRLRPICS) constitute a chloroplast transit peptide. The Mn(2+) site is built by aspartate 350 and aspartate 354. The short motif at 350–354 (DDVYD) is the DDXXD motif element. Homodimerization regions lie at residues 356–362 (YGTLDEL) and 428–465 (EAKW…FTLP). Mn(2+)-binding residues include aspartate 494 and glutamate 502.

It belongs to the terpene synthase family. In terms of assembly, homodimer. The cofactor is Mn(2+). It depends on Mg(2+) as a cofactor.

The protein resides in the plastid. Its subcellular location is the chloroplast. It carries out the reaction (2E)-geranyl diphosphate = gamma-terpinene + diphosphate. It functions in the pathway secondary metabolite biosynthesis; terpenoid biosynthesis. Functionally, involved in the biosynthesis of phenolic monoterpenes natural products thymol and carvacrol which have a broad range of biological activities acting as antimicrobial compounds, insecticides, antioxidants and pharmaceutical agents. Monoterpene synthase which catalyzes the conversion of geranyl diphosphate (GPP) to gamma-terpinene and minor amounts of other monoterpenes (e.g. alpha-thujene, alpha-terpinene, myrcene, sabinene, (+)-R-limonene, alpha-pinene and alpha-phellandrene). The chain is Gamma-terpinene synthase, chloroplastic from Thymus caespititius (Cretan thyme).